A 374-amino-acid polypeptide reads, in one-letter code: Queuine tRNA-ribosyltransferase (374 aa).

Residue Asp-89 is the Proton acceptor of the active site. Substrate contacts are provided by residues 89 to 93 (DSGGF), Asp-143, Gln-187, and Gly-214. The RNA binding stretch occupies residues 245–251 (GVGKPED). Asp-264 acts as the Nucleophile in catalysis. The segment at 269 to 273 (TRNAR) is RNA binding; important for wobble base 34 recognition. 4 residues coordinate Zn(2+): Cys-302, Cys-304, Cys-307, and His-333.

It belongs to the queuine tRNA-ribosyltransferase family. In terms of assembly, homodimer. Within each dimer, one monomer is responsible for RNA recognition and catalysis, while the other monomer binds to the replacement base PreQ1. Zn(2+) serves as cofactor.

It carries out the reaction 7-aminomethyl-7-carbaguanine + guanosine(34) in tRNA = 7-aminomethyl-7-carbaguanosine(34) in tRNA + guanine. It functions in the pathway tRNA modification; tRNA-queuosine biosynthesis. Catalyzes the base-exchange of a guanine (G) residue with the queuine precursor 7-aminomethyl-7-deazaguanine (PreQ1) at position 34 (anticodon wobble position) in tRNAs with GU(N) anticodons (tRNA-Asp, -Asn, -His and -Tyr). Catalysis occurs through a double-displacement mechanism. The nucleophile active site attacks the C1' of nucleotide 34 to detach the guanine base from the RNA, forming a covalent enzyme-RNA intermediate. The proton acceptor active site deprotonates the incoming PreQ1, allowing a nucleophilic attack on the C1' of the ribose to form the product. After dissociation, two additional enzymatic reactions on the tRNA convert PreQ1 to queuine (Q), resulting in the hypermodified nucleoside queuosine (7-(((4,5-cis-dihydroxy-2-cyclopenten-1-yl)amino)methyl)-7-deazaguanosine). The protein is Queuine tRNA-ribosyltransferase of Yersinia pseudotuberculosis serotype O:1b (strain IP 31758).